We begin with the raw amino-acid sequence, 372 residues long: Glutamate 5-kinase (372 aa).

Position 14 (Lys-14) interacts with ATP. Residues Ser-54, Asp-141, and Asn-153 each coordinate substrate. Residue Thr-173–Asp-174 participates in ATP binding. Residues Arg-280–Ser-358 enclose the PUA domain.

Belongs to the glutamate 5-kinase family.

The protein resides in the cytoplasm. It catalyses the reaction L-glutamate + ATP = L-glutamyl 5-phosphate + ADP. It participates in amino-acid biosynthesis; L-proline biosynthesis; L-glutamate 5-semialdehyde from L-glutamate: step 1/2. Its function is as follows. Catalyzes the transfer of a phosphate group to glutamate to form L-glutamate 5-phosphate. The chain is Glutamate 5-kinase from Pseudomonas entomophila (strain L48).